The following is a 156-amino-acid chain: Small ribosomal subunit protein uS7 (156 aa).

The protein belongs to the universal ribosomal protein uS7 family. Part of the 30S ribosomal subunit. Contacts proteins S9 and S11.

Its function is as follows. One of the primary rRNA binding proteins, it binds directly to 16S rRNA where it nucleates assembly of the head domain of the 30S subunit. Is located at the subunit interface close to the decoding center, probably blocks exit of the E-site tRNA. This is Small ribosomal subunit protein uS7 from Mycobacterium tuberculosis (strain CDC 1551 / Oshkosh).